A 468-amino-acid chain; its full sequence is Argininosuccinate lyase (468 aa).

The protein belongs to the lyase 1 family. Argininosuccinate lyase subfamily.

It localises to the cytoplasm. The catalysed reaction is 2-(N(omega)-L-arginino)succinate = fumarate + L-arginine. The protein operates within amino-acid biosynthesis; L-arginine biosynthesis; L-arginine from L-ornithine and carbamoyl phosphate: step 3/3. The polypeptide is Argininosuccinate lyase (Paraburkholderia xenovorans (strain LB400)).